Consider the following 782-residue polypeptide: Nucleolar RNA helicase 2 (782 aa).

The tract at residues Met-1–Phe-184 is disordered. Phosphoserine is present on residues Ser-7 and Ser-13. Basic and acidic residues-rich tracts occupy residues Pro-26–Glu-42 and Glu-99–Glu-117. Position 39 is an N6-acetyllysine (Lys-39). Residue Lys-114 forms a Glycyl lysine isopeptide (Lys-Gly) (interchain with G-Cter in SUMO1); alternate linkage. Lys-114 is covalently cross-linked (Glycyl lysine isopeptide (Lys-Gly) (interchain with G-Cter in SUMO2); alternate). Ser-119 is subject to Phosphoserine. The segment covering Gly-134–Glu-143 has biased composition (basic and acidic residues). Position 135 is an N6-acetyllysine (Lys-135). Phosphoserine occurs at positions 145 and 169. Residues Glu-172–Glu-181 are compositionally biased toward basic and acidic residues. The short motif at Gly-182–Ala-210 is the Q motif element. Positions Phe-213–Gln-392 constitute a Helicase ATP-binding domain. Position 226 to 233 (Ala-226 to Thr-233) interacts with ATP. Thr-292 bears the Phosphothreonine mark. A DEAD box motif is present at residues Asp-335–Asp-338. Residues Asp-425–Lys-569 enclose the Helicase C-terminal domain. The residue at position 563 (Ser-563) is a Phosphoserine. At Lys-596 the chain carries N6-acetyllysine. The tract at residues Ala-704 to Gln-782 is disordered. 3 tandem repeats follow at residues Gly-720–Arg-724, Phe-731–Arg-735, and Phe-741–Arg-747. The interval Gly-720–Arg-747 is 3 X 5 AA repeats. Residues Arg-728–Gln-756 show a composition bias toward low complexity. Residue Lys-778 is modified to N6-acetyllysine.

Belongs to the DEAD box helicase family. DDX21/DDX50 subfamily. Homodimer; homodimerizes via its N-terminus. Found in a multi-helicase-TICAM1 complex at least composed of DHX36, DDX1, DDX21 and TICAM1; this complex exists in resting cells with or without poly(I:C) RNA ligand stimulation. Interacts (via C-terminus) with TICAM1 (via TIR domain). Interacts with DHX36 (via C-terminus); this interaction serves as bridges to TICAM1. Interacts (via C-terminus) with DDX1 (via B30.2/SPRY domain); this interaction serves as bridges to TICAM1. Component of the B-WICH complex, at least composed of SMARCA5/SNF2H, BAZ1B/WSTF, SF3B1, DEK, MYO1C, ERCC6, MYBBP1A and DDX21. Interacts with C1QBP. Interacts with JUN. Interacts with WDR46. Interacts with MCM3AP. Interacts with WDR43. Interacts with KPNA3. Interacts with GID4. Post-translationally, acetylation by CREBBP/CBP inhibits the helicase activity. Deacetylation by SIRT7 promotes the helicase activity and overcomes R-loop-mediated stalling of RNA polymerases.

It localises to the nucleus. The protein localises to the nucleolus. It is found in the nucleoplasm. The protein resides in the cytoplasm. Its subcellular location is the cytosol. It localises to the mitochondrion. The catalysed reaction is ATP + H2O = ADP + phosphate + H(+). With respect to regulation, acetylation inhibits the helicase activity. Functionally, RNA helicase that acts as a sensor of the transcriptional status of both RNA polymerase (Pol) I and II: promotes ribosomal RNA (rRNA) processing and transcription from polymerase II (Pol II). Binds various RNAs, such as rRNAs, snoRNAs, 7SK and, at lower extent, mRNAs. In the nucleolus, localizes to rDNA locus, where it directly binds rRNAs and snoRNAs, and promotes rRNA transcription, processing and modification. Required for rRNA 2'-O-methylation, possibly by promoting the recruitment of late-acting snoRNAs SNORD56 and SNORD58 with pre-ribosomal complexes. In the nucleoplasm, binds 7SK RNA and is recruited to the promoters of Pol II-transcribed genes: acts by facilitating the release of P-TEFb from inhibitory 7SK snRNP in a manner that is dependent on its helicase activity, thereby promoting transcription of its target genes. Functions as a cofactor for JUN-activated transcription: required for phosphorylation of JUN at 'Ser-77'. Can unwind double-stranded RNA (helicase) and can fold or introduce a secondary structure to a single-stranded RNA (foldase). Together with SIRT7, required to prevent R-loop-associated DNA damage and transcription-associated genomic instability: deacetylation by SIRT7 activates the helicase activity, thereby overcoming R-loop-mediated stalling of RNA polymerases. Involved in rRNA processing. May bind to specific miRNA hairpins. Component of a multi-helicase-TICAM1 complex that acts as a cytoplasmic sensor of viral double-stranded RNA (dsRNA) and plays a role in the activation of a cascade of antiviral responses including the induction of pro-inflammatory cytokines via the adapter molecule TICAM1. The protein is Nucleolar RNA helicase 2 (Ddx21) of Rattus norvegicus (Rat).